The primary structure comprises 297 residues: Bifunctional protein FolD (297 aa).

NADP(+)-binding positions include 167–169 (GRS) and I233.

The protein belongs to the tetrahydrofolate dehydrogenase/cyclohydrolase family. As to quaternary structure, homodimer.

It catalyses the reaction (6R)-5,10-methylene-5,6,7,8-tetrahydrofolate + NADP(+) = (6R)-5,10-methenyltetrahydrofolate + NADPH. It carries out the reaction (6R)-5,10-methenyltetrahydrofolate + H2O = (6R)-10-formyltetrahydrofolate + H(+). Its pathway is one-carbon metabolism; tetrahydrofolate interconversion. Its function is as follows. Catalyzes the oxidation of 5,10-methylenetetrahydrofolate to 5,10-methenyltetrahydrofolate and then the hydrolysis of 5,10-methenyltetrahydrofolate to 10-formyltetrahydrofolate. In Zymomonas mobilis subsp. mobilis (strain ATCC 31821 / ZM4 / CP4), this protein is Bifunctional protein FolD.